We begin with the raw amino-acid sequence, 262 residues long: Polyamine aminopropyltransferase (262 aa).

The PABS domain occupies 1–249; it reads MWITQEITPY…DIHRAAFALP (249 aa). N29 contributes to the S-methyl-5'-thioadenosine binding site. D83 serves as a coordination point for spermidine. The active-site Proton acceptor is D155.

The protein belongs to the spermidine/spermine synthase family. In terms of assembly, homodimer or homotetramer.

The protein resides in the cytoplasm. The enzyme catalyses S-adenosyl 3-(methylsulfanyl)propylamine + putrescine = S-methyl-5'-thioadenosine + spermidine + H(+). It participates in amine and polyamine biosynthesis; spermidine biosynthesis; spermidine from putrescine: step 1/1. Catalyzes the irreversible transfer of a propylamine group from the amino donor S-adenosylmethioninamine (decarboxy-AdoMet) to putrescine (1,4-diaminobutane) to yield spermidine. The sequence is that of Polyamine aminopropyltransferase from Helicobacter acinonychis (strain Sheeba).